Reading from the N-terminus, the 421-residue chain is Esterase LipQ (421 aa).

Active-site residues include S249, D344, and H377.

This sequence belongs to the 'GDXG' lipolytic enzyme family.

It carries out the reaction hexadecanoate ester + H2O = an aliphatic alcohol + hexadecanoate + H(+). Shows lipase activity. Is highly immunogenic and may play an important role in the virulence and pathogenesis of M.tuberculosis infection, by altering the balance of cytokines. Significantly down-regulates the expression level of pro-inflammatory cytokines (TNF-alpha and IFN-gamma) and up-regulates the level of anti-inflammatory cytokines such as IL-4 and IL-10 as compared to LPS stimulated macrophages. Also inhibits the expression of iNOS, TLR2 and transcription factor NF-kappa-B in LPS stimulated macrophages whereas the expression of TLR-4 remains unchanged. The protein is Esterase LipQ of Mycobacterium tuberculosis (strain ATCC 25618 / H37Rv).